Consider the following 144-residue polypeptide: MLMPKRVKHRKVQRGRMKGKATRGNFLAYGDFGIQATTCGWITSNQIEAARIAINRYIRRGGKLWIKIFPDKPVTEKPAETRMGSGKGSVEYWVAVVKPGRVLFELSGVDEEKAREAMRLASHKLPVKTKFVTRRDFEEMGGEE.

The protein belongs to the universal ribosomal protein uL16 family. As to quaternary structure, part of the 50S ribosomal subunit.

Functionally, binds 23S rRNA and is also seen to make contacts with the A and possibly P site tRNAs. This Clostridium perfringens (strain ATCC 13124 / DSM 756 / JCM 1290 / NCIMB 6125 / NCTC 8237 / Type A) protein is Large ribosomal subunit protein uL16.